A 210-amino-acid polypeptide reads, in one-letter code: Chaperone protein TorD (210 aa).

This sequence belongs to the TorD/DmsD family. TorD subfamily.

The protein localises to the cytoplasm. Involved in the biogenesis of TorA. Acts on TorA before the insertion of the molybdenum cofactor and, as a result, probably favors a conformation of the apoenzyme that is competent for acquiring the cofactor. This chain is Chaperone protein TorD, found in Salmonella arizonae (strain ATCC BAA-731 / CDC346-86 / RSK2980).